The primary structure comprises 384 residues: NAD-capped RNA hydrolase NPY1 (384 aa).

Zn(2+) is bound by residues cysteine 179, cysteine 182, cysteine 197, and cysteine 206. Residues 219–351 (PRTDPTVIIA…AGGYRVPFKN (133 aa)) enclose the Nudix hydrolase domain. Residues alanine 256, glutamate 272, glutamate 276, and glutamate 322 each coordinate Mg(2+). Residues 256 to 258 (AGF), glutamate 272, glutamate 276, and glutamate 322 contribute to the substrate site. The Nudix box motif lies at 257–278 (GFMEPSETIEEACIREIWEETG). A Microbody targeting signal motif is present at residues 378 to 380 (KTS).

Belongs to the Nudix hydrolase family. NudC subfamily. In terms of assembly, homodimer. Mg(2+) is required as a cofactor. Requires Zn(2+) as cofactor.

The protein localises to the peroxisome. It catalyses the reaction a 5'-end NAD(+)-phospho-ribonucleoside in mRNA + H2O = a 5'-end phospho-adenosine-phospho-ribonucleoside in mRNA + beta-nicotinamide D-ribonucleotide + 2 H(+). The enzyme catalyses NAD(+) + H2O = beta-nicotinamide D-ribonucleotide + AMP + 2 H(+). The catalysed reaction is NADH + H2O = reduced beta-nicotinamide D-ribonucleotide + AMP + 2 H(+). MRNA decapping enzyme that specifically removes the nicotinamide adenine dinucleotide (NAD) cap from a subset of mRNAs by hydrolyzing the diphosphate linkage to produce nicotinamide mononucleotide (NMN) and 5' monophosphate mRNA. The NAD-cap is present at the 5'-end of some RNAs; in contrast to the canonical N7 methylguanosine (m7G) cap, the NAD cap promotes mRNA decay. Mediates the hydrolysis of some nucleoside diphosphate derivatives. The protein is NAD-capped RNA hydrolase NPY1 of Saccharomyces cerevisiae (strain ATCC 204508 / S288c) (Baker's yeast).